The primary structure comprises 355 residues: Phenylalanine--tRNA ligase alpha subunit (355 aa).

Residue E273 participates in Mg(2+) binding.

The protein belongs to the class-II aminoacyl-tRNA synthetase family. Phe-tRNA synthetase alpha subunit type 1 subfamily. In terms of assembly, tetramer of two alpha and two beta subunits. The cofactor is Mg(2+).

It localises to the cytoplasm. It catalyses the reaction tRNA(Phe) + L-phenylalanine + ATP = L-phenylalanyl-tRNA(Phe) + AMP + diphosphate + H(+). This is Phenylalanine--tRNA ligase alpha subunit from Bifidobacterium longum subsp. infantis (strain ATCC 15697 / DSM 20088 / JCM 1222 / NCTC 11817 / S12).